The sequence spans 183 residues: Probable GTP-binding protein EngB (183 aa).

An EngB-type G domain is found at 17 to 183 (DYPEVVFVGR…KKELLSRILN (167 aa)). Residues 25–32 (GRSNVGKS), 51–55 (GRTRA), 69–72 (DVPG), 137–140 (TKID), and 166–168 (SSA) each bind GTP. 2 residues coordinate Mg(2+): Ser-32 and Thr-53.

Belongs to the TRAFAC class TrmE-Era-EngA-EngB-Septin-like GTPase superfamily. EngB GTPase family. Requires Mg(2+) as cofactor.

Functionally, necessary for normal cell division and for the maintenance of normal septation. The polypeptide is Probable GTP-binding protein EngB (Aquifex aeolicus (strain VF5)).